The sequence spans 131 residues: Small ribosomal subunit protein uS8 (131 aa).

This sequence belongs to the universal ribosomal protein uS8 family. In terms of assembly, part of the 30S ribosomal subunit. Contacts proteins S5 and S12.

Its function is as follows. One of the primary rRNA binding proteins, it binds directly to 16S rRNA central domain where it helps coordinate assembly of the platform of the 30S subunit. In Acholeplasma laidlawii (strain PG-8A), this protein is Small ribosomal subunit protein uS8.